The primary structure comprises 133 residues: Protein NrdI (133 aa).

It belongs to the NrdI family.

Functionally, probably involved in ribonucleotide reductase function. This Cronobacter sakazakii (strain ATCC BAA-894) (Enterobacter sakazakii) protein is Protein NrdI.